A 549-amino-acid chain; its full sequence is Glucose-6-phosphate isomerase (549 aa).

The active-site Proton donor is Glu-355. Catalysis depends on residues His-386 and Lys-514.

The protein belongs to the GPI family.

The protein localises to the cytoplasm. The catalysed reaction is alpha-D-glucose 6-phosphate = beta-D-fructose 6-phosphate. Its pathway is carbohydrate biosynthesis; gluconeogenesis. The protein operates within carbohydrate degradation; glycolysis; D-glyceraldehyde 3-phosphate and glycerone phosphate from D-glucose: step 2/4. In terms of biological role, catalyzes the reversible isomerization of glucose-6-phosphate to fructose-6-phosphate. In Salmonella enteritidis PT4 (strain P125109), this protein is Glucose-6-phosphate isomerase.